The primary structure comprises 320 residues: Cytochrome f (320 aa).

An N-terminal signal peptide occupies residues 1 to 35; the sequence is MQTINTFSWINQRITRSISVLLLVYIITRTSISSA. Heme is bound by residues Y36, C56, C59, and H60. The helical transmembrane segment at 286 to 306 threads the bilayer; that stretch reads VQGLLFFLASVILAQIFLVLK.

This sequence belongs to the cytochrome f family. As to quaternary structure, the 4 large subunits of the cytochrome b6-f complex are cytochrome b6, subunit IV (17 kDa polypeptide, petD), cytochrome f and the Rieske protein, while the 4 small subunits are PetG, PetL, PetM and PetN. The complex functions as a dimer. Heme is required as a cofactor.

The protein resides in the plastid thylakoid membrane. Its function is as follows. Component of the cytochrome b6-f complex, which mediates electron transfer between photosystem II (PSII) and photosystem I (PSI), cyclic electron flow around PSI, and state transitions. This Cuscuta exaltata (Tall dodder) protein is Cytochrome f.